The following is a 426-amino-acid chain: Branched-chain amino acid permease BrnQ (426 aa).

A run of 12 helical transmembrane segments spans residues 11–31 (LMLFSMFFGAGNLIFPPMLGL), 41–61 (ILGFLATSVLLPVLAIIAVVL), 76–96 (IFGLVFPIAAYLSIGAFYALP), 111–131 (NALYSGLFNFVFFAVALALSW), 140–160 (LGKWLTPALLTLIVVLVVLSV), 186–206 (GYMTMDAIAALAFGIVVISAF), 219–239 (VVSAFIAGILLALVYLGLGSI), 268–288 (IMFVAILILACMTTAVGLISA), 296–316 (LLPGVKYHVWATVFALISFGV), 324–344 (VLAVAAPVISFIYPSAITLVF), 358–378 (TYLFGIWTAVVWALFMSIPAL), and 390–410 (MSLGWVVPVLVASAIGLAIDW).

This sequence belongs to the branched chain amino acid transporter family.

The protein localises to the cell membrane. Functionally, branched chain amino acid transport system, which transports isoleucine. This is Branched-chain amino acid permease BrnQ from Corynebacterium glutamicum (strain ATCC 13032 / DSM 20300 / JCM 1318 / BCRC 11384 / CCUG 27702 / LMG 3730 / NBRC 12168 / NCIMB 10025 / NRRL B-2784 / 534).